Reading from the N-terminus, the 357-residue chain is Uroporphyrinogen decarboxylase (357 aa).

Substrate is bound by residues 27–31, aspartate 77, tyrosine 154, serine 209, and histidine 330; that span reads RQAGR.

The protein belongs to the uroporphyrinogen decarboxylase family. Homodimer.

It localises to the cytoplasm. It catalyses the reaction uroporphyrinogen III + 4 H(+) = coproporphyrinogen III + 4 CO2. Its pathway is porphyrin-containing compound metabolism; protoporphyrin-IX biosynthesis; coproporphyrinogen-III from 5-aminolevulinate: step 4/4. Functionally, catalyzes the decarboxylation of four acetate groups of uroporphyrinogen-III to yield coproporphyrinogen-III. This chain is Uroporphyrinogen decarboxylase, found in Acinetobacter baumannii (strain ACICU).